Here is a 228-residue protein sequence, read N- to C-terminus: ATP-dependent dethiobiotin synthetase BioD (228 aa).

12-17 contacts ATP; it reads DVGKTY. Thr-16 is a binding site for Mg(2+). Lys-37 is a catalytic residue. ATP is bound by residues Asp-53, 114–117, 174–175, 203–205, and Asn-210; these read EGMG, ND, and PFI. Positions 53 and 114 each coordinate Mg(2+).

The protein belongs to the dethiobiotin synthetase family. In terms of assembly, homodimer. It depends on Mg(2+) as a cofactor.

The protein localises to the cytoplasm. It carries out the reaction (7R,8S)-7,8-diammoniononanoate + CO2 + ATP = (4R,5S)-dethiobiotin + ADP + phosphate + 3 H(+). It participates in cofactor biosynthesis; biotin biosynthesis; biotin from 7,8-diaminononanoate: step 1/2. Functionally, catalyzes a mechanistically unusual reaction, the ATP-dependent insertion of CO2 between the N7 and N8 nitrogen atoms of 7,8-diaminopelargonic acid (DAPA, also called 7,8-diammoniononanoate) to form a ureido ring. This Nitrosopumilus maritimus (strain SCM1) protein is ATP-dependent dethiobiotin synthetase BioD.